Reading from the N-terminus, the 89-residue chain is ATP synthase subunit H, mitochondrial (89 aa).

In terms of assembly, F-type ATP synthases have 2 components, the catalytic core F(1) and the membrane-embedded component F(0), linked together by a central stalk and a peripheral stalk. The central stalk, also called rotor shaft, is often seen as part of F(1). The peripheral stalk is seen as part of F(0). F(0) contains the membrane channel next to the rotor. F-type ATP synthases form dimers but each monomer functions independently in ATP generation. The dimer consists of 18 different polypeptides: ATP1 (subunit alpha, part of F(1), 3 molecules per monomer), ATP2 (subunit beta, part of F(1), 3 molecules per monomer), ATP3 (subunit gamma, part of the central stalk), ATP4 (subunit b, part of the peripheral stalk), ATP5/OSCP (subunit 5/OSCP, part of the peripheral stalk), ATP6 (subunit a, part of the peripheral stalk), ATP7 (subunit d, part of the peripheral stalk), ATP8 (subunit 8, part of the peripheral stalk), OLI1 (subunit c, part of the rotor, 10 molecules per monomer), ATP14 (subunit H, part of the peripheral stalk), ATP15 (subunit epsilon, part of the central stalk), ATP16 (subunit delta, part of the central stalk), ATP17 (subunit f, part of the peripheral stalk), ATP18 (subunit i/j, part of the peripheral stalk). Dimer-specific subunits are ATP19 (subunit k, at interface between monomers), ATP20 (subunit g, at interface between monomers), TIM11 (subunit e, at interface between monomers). Also contains subunit L.

It is found in the mitochondrion inner membrane. Mitochondrial membrane ATP synthase (F(1)F(0) ATP synthase or Complex V) produces ATP from ADP in the presence of a proton gradient across the membrane which is generated by electron transport complexes of the respiratory chain. F-type ATP synthases consist of two structural domains, F(1) - containing the extramembraneous catalytic core, and F(0) - containing the membrane proton channel, linked together by a central stalk and a peripheral stalk. During catalysis, ATP synthesis in the catalytic domain of F(1) is coupled via a rotary mechanism of the central stalk subunits to proton translocation. Part of the peripheral stalk. This Pichia angusta (Yeast) protein is ATP synthase subunit H, mitochondrial.